We begin with the raw amino-acid sequence, 383 residues long: GDSL esterase/lipase At1g28610 (383 aa).

The first 22 residues, 1–22 (MASLDSLVSFFLSTLFVTIVSS), serve as a signal peptide directing secretion. Ser-38 functions as the Nucleophile in the catalytic mechanism. N-linked (GlcNAc...) asparagine glycosylation is found at Asn-134, Asn-184, and Asn-315. Active-site residues include Asp-340 and His-343.

The protein belongs to the 'GDSL' lipolytic enzyme family.

Its subcellular location is the secreted. In Arabidopsis thaliana (Mouse-ear cress), this protein is GDSL esterase/lipase At1g28610.